Reading from the N-terminus, the 592-residue chain is Arginine--tRNA ligase (592 aa).

Positions 134–144 (ANPTGPLHVGH) match the 'HIGH' region motif.

The protein belongs to the class-I aminoacyl-tRNA synthetase family. In terms of assembly, monomer.

It localises to the cytoplasm. It catalyses the reaction tRNA(Arg) + L-arginine + ATP = L-arginyl-tRNA(Arg) + AMP + diphosphate. This Coxiella burnetii (strain CbuG_Q212) (Coxiella burnetii (strain Q212)) protein is Arginine--tRNA ligase.